Here is a 236-residue protein sequence, read N- to C-terminus: Purine nucleoside phosphorylase DeoD-type 2 (236 aa).

Histidine 5 is a binding site for a purine D-ribonucleoside. Residues glycine 21, arginine 25, arginine 44, and 88 to 91 (RVGS) contribute to the phosphate site. A purine D-ribonucleoside-binding positions include 180–182 (DME) and 204–205 (SD). The Proton donor role is filled by aspartate 205.

The protein belongs to the PNP/UDP phosphorylase family. Homohexamer; trimer of homodimers.

It catalyses the reaction a purine D-ribonucleoside + phosphate = a purine nucleobase + alpha-D-ribose 1-phosphate. It carries out the reaction a purine 2'-deoxy-D-ribonucleoside + phosphate = a purine nucleobase + 2-deoxy-alpha-D-ribose 1-phosphate. In terms of biological role, catalyzes the reversible phosphorolytic breakdown of the N-glycosidic bond in the beta-(deoxy)ribonucleoside molecules, with the formation of the corresponding free purine bases and pentose-1-phosphate. This Aliivibrio fischeri (strain ATCC 700601 / ES114) (Vibrio fischeri) protein is Purine nucleoside phosphorylase DeoD-type 2.